A 312-amino-acid polypeptide reads, in one-letter code: Epoxyqueuosine reductase (312 aa).

The active-site Proton donor is the Asp-132. The region spanning 174–206 (EVLEADKPSKPICGECEKCIEACPTKAIEEPFI) is the 4Fe-4S ferredoxin-type 1 domain. [4Fe-4S] cluster contacts are provided by Cys-186, Cys-189, Cys-192, Cys-196, Cys-212, Cys-240, Cys-243, and Cys-247. One can recognise a 4Fe-4S ferredoxin-type 2 domain in the interval 226-257 (PENIINKMGNWIAGCDICQDVCPWNQKHIPST).

The protein belongs to the QueG family. Monomer. It depends on cob(II)alamin as a cofactor. [4Fe-4S] cluster serves as cofactor.

The protein resides in the cytoplasm. The catalysed reaction is epoxyqueuosine(34) in tRNA + AH2 = queuosine(34) in tRNA + A + H2O. It functions in the pathway tRNA modification; tRNA-queuosine biosynthesis. Functionally, catalyzes the conversion of epoxyqueuosine (oQ) to queuosine (Q), which is a hypermodified base found in the wobble positions of tRNA(Asp), tRNA(Asn), tRNA(His) and tRNA(Tyr). This chain is Epoxyqueuosine reductase, found in Prochlorococcus marinus (strain NATL2A).